The sequence spans 347 residues: Merozoite surface protein 2 (347 aa).

The signal sequence occupies residues 1–20; the sequence is MKVIKTLSIINFFIFVTFNI. N22 and N36 each carry an N-linked (GlcNAc...) asparagine glycan. The segment at 44–273 is polymorphic region; sequence AESKPPTGDG…EQTESPELQS (230 aa). 22 consecutive repeat copies span residues 53–60, 61–68, 69–76, 77–84, 85–88, 89–92, 93–96, 97–100, 101–104, 105–108, 109–112, 113–116, 117–120, 121–124, 125–128, 129–132, 133–136, 137–140, 141–144, 145–152, 153–156, and 157–164. The segment at 53–164 is 6 X 8 AA repeats of G-A-V-A-S-A-G-N; it reads GAVASAGNGA…GNGAVASAGN (112 aa). A 16 X 4 AA repeats of G-A-G-N region spans residues 85-156; it reads GAGNGAGNGA…VASAGNGAGN (72 aa). A compositionally biased stretch (low complexity) spans 165-206; that stretch reads GAVAERSSSTPATTTTTTTTNDAEASTSTSSENSNHNNAETN. A disordered region spans residues 165–308; sequence GAVAERSSST…DSQKECTDGN (144 aa). Polar residues-rich tracts occupy residues 213 to 240 and 247 to 275; these read VQPN…NVPR and KSPT…QSAP. N224 is a glycosylation site (N-linked (GlcNAc...) asparagine). A glycan (N-linked (GlcNAc...) asparagine) is linked at N296. A disulfide bridge connects residues C304 and C312. N-linked (GlcNAc...) asparagine glycans are attached at residues N320 and N321. N321 is lipidated: GPI-anchor amidated asparagine. The propeptide at 322 to 347 is removed in mature form; the sequence is SSNIASINKFVVLISATLVLSFAIFI.

It localises to the cell membrane. Its function is as follows. May play a role in the merozoite attachment to the erythrocyte. The protein is Merozoite surface protein 2 of Plasmodium falciparum (isolate Nig32 / Nigeria).